Here is a 270-residue protein sequence, read N- to C-terminus: Putative methylsterol monooxygenase DDB_G0269788 (270 aa).

3 consecutive transmembrane segments (helical) span residues 31–51, 82–102, and 110–130; these read FIAH…CDFM, IFVQ…IGLS, and IPYL…YFYW. A Fatty acid hydroxylase domain is found at 118–249; that stretch reads ACCFLIEDFY…FTYLDKIFGT (132 aa). The short motif at 132–136 is the Histidine box-1 element; that stretch reads HRALH. Residues 145–149 carry the Histidine box-2 motif; the sequence is HKVHH. Residues 224–230 carry the Histidine box-3 motif; sequence FHDFHHE.

The protein belongs to the sterol desaturase family. Requires Fe cation as cofactor.

Its subcellular location is the endoplasmic reticulum membrane. The catalysed reaction is 4,4-dimethyl-5alpha-cholest-7-en-3beta-ol + 6 Fe(II)-[cytochrome b5] + 3 O2 + 5 H(+) = 4alpha-carboxy-4beta-methyl-5alpha-cholest-7-ene-3beta-ol + 6 Fe(III)-[cytochrome b5] + 4 H2O. The protein operates within steroid biosynthesis; zymosterol biosynthesis; zymosterol from lanosterol: step 3/6. The protein is Putative methylsterol monooxygenase DDB_G0269788 of Dictyostelium discoideum (Social amoeba).